The sequence spans 321 residues: UPF0676 protein C1494.01 (321 aa).

Positions 159-267 (EEDVLRLLKY…RQTIAYFVTP (109 aa)) constitute a Fe2OG dioxygenase domain.

The protein belongs to the UPF0676 family.

It localises to the cytoplasm. It is found in the nucleus. In Schizosaccharomyces pombe (strain 972 / ATCC 24843) (Fission yeast), this protein is UPF0676 protein C1494.01.